A 219-amino-acid polypeptide reads, in one-letter code: UPF0173 metal-dependent hydrolase Mhun_1705 (219 aa).

This sequence belongs to the UPF0173 family.

This Methanospirillum hungatei JF-1 (strain ATCC 27890 / DSM 864 / NBRC 100397 / JF-1) protein is UPF0173 metal-dependent hydrolase Mhun_1705.